Here is a 289-residue protein sequence, read N- to C-terminus: Bis(5'-nucleosyl)-tetraphosphatase, symmetrical (289 aa).

This sequence belongs to the Ap4A hydrolase family.

It catalyses the reaction P(1),P(4)-bis(5'-adenosyl) tetraphosphate + H2O = 2 ADP + 2 H(+). Functionally, hydrolyzes diadenosine 5',5'''-P1,P4-tetraphosphate to yield ADP. This Yersinia pseudotuberculosis serotype IB (strain PB1/+) protein is Bis(5'-nucleosyl)-tetraphosphatase, symmetrical.